The sequence spans 577 residues: MQWLMRFRTLWGIHKSFHNIHPAPSQLRCRSLSEFGAPRWNDYEVPEEFNFASYVLDYWAQKEKEGKRGPNPAFWWVNGQGDEVKWSFREMGDLTRRVANVFTQTCGLQQGDHLALMLPRVPEWWLVAVGCMRTGIIFIPATILLKAKDILYRLQLSKAKGIVTIDALASEVDSIASQCPSLKTKLLVSDHSREGWLDFRSLVKSASPEHTCVKSKTLDPMVIFFTSGTTGFPKMAKHSHGLALQPSFPGSRKLRSLKTSDVSWCLSDSGWIVATIWTLVEPWTAGCTVFIHHLPQFDTKVIIQTLLKYPINHFWGVSSIYRMILQQDFTSIRFPALEHCYTGGEVVLPKDQEEWKRRTGLLLYENYGQSETGLICATYWGMKIKPGFMGKATPPYDVQVIDDKGSILPPNTEGNIGIRIKPVRPVSLFMCYEGDPEKTAKVECGDFYNTGDRGKMDEEGYICFLGRSDDIINASGYRIGPAEVESALVEHPAVAESAVVGSPDPIRGEVVKAFIVLTPQFLSHDKDQLTKELQQHVKSVTAPYKYPRKVEFVSELPKTITGKIERKELRKKETGQM.

The transit peptide at 1–31 directs the protein to the mitochondrion; it reads MQWLMRFRTLWGIHKSFHNIHPAPSQLRCRS. Lysine 85 carries the N6-succinyllysine modification. The residue at position 146 (lysine 146) is an N6-acetyllysine; alternate. Lysine 146 bears the N6-succinyllysine; alternate mark. Residue lysine 183 is modified to N6-succinyllysine. Lysine 204 is subject to N6-acetyllysine; alternate. Residue lysine 204 is modified to N6-succinyllysine; alternate. At lysine 214 the chain carries N6-acetyllysine. Residue 226–234 participates in ATP binding; that stretch reads TSGTTGFPK. The residue at position 237 (lysine 237) is an N6-succinyllysine. N6-acetyllysine; alternate is present on residues lysine 356 and lysine 391. 2 positions are modified to N6-succinyllysine; alternate: lysine 356 and lysine 391. Residues aspartate 452 and arginine 467 each coordinate ATP. Lysine 531 bears the N6-acetyllysine mark. Position 538 is an N6-acetyllysine; alternate (lysine 538). Lysine 538 is subject to N6-succinyllysine; alternate. N6-acetyllysine is present on lysine 549. Lysine 563 is an ATP binding site.

The protein belongs to the ATP-dependent AMP-binding enzyme family. In terms of assembly, monomer. Requires Mg(2+) as cofactor. Mn(2+) serves as cofactor.

Its subcellular location is the mitochondrion matrix. The protein resides in the mitochondrion. It catalyses the reaction a medium-chain fatty acid + ATP + CoA = a medium-chain fatty acyl-CoA + AMP + diphosphate. The enzyme catalyses benzoate + ATP + CoA = benzoyl-CoA + AMP + diphosphate. It carries out the reaction (R)-lipoate + GTP + H(+) = (R)-lipoyl-GMP + diphosphate. The catalysed reaction is octanoate + ATP + CoA = octanoyl-CoA + AMP + diphosphate. It catalyses the reaction decanoate + ATP + CoA = decanoyl-CoA + AMP + diphosphate. The enzyme catalyses dodecanoate + ATP + CoA = dodecanoyl-CoA + AMP + diphosphate. It carries out the reaction tetradecanoate + ATP + CoA = tetradecanoyl-CoA + AMP + diphosphate. The catalysed reaction is hexanoate + ATP + CoA = hexanoyl-CoA + AMP + diphosphate. It catalyses the reaction butanoate + ATP + CoA = butanoyl-CoA + AMP + diphosphate. The enzyme catalyses hexadecanoate + ATP + CoA = hexadecanoyl-CoA + AMP + diphosphate. Its activity is regulated as follows. Activated by monovalent cations, such as potassium, rubidium or ammonium. Its function is as follows. Catalyzes the activation of fatty acids by CoA to produce an acyl-CoA, the first step in fatty acid metabolism. Capable of activating medium-chain fatty acids (e.g. butyric (C4) to decanoic (C10) acids), and certain carboxylate-containing xenobiotics, e.g. benzoate. Also catalyzes the activation of lipoate to lipoyl-nucleoside monophosphate. Activates lipoate with GTP at a 1000-fold higher rate than with ATP and activates both (R)- and (S)-lipoate to the respective lipoyl-GMP, with a preference for (R)-lipoate. This chain is Acyl-coenzyme A synthetase ACSM1, mitochondrial (ACSM1), found in Homo sapiens (Human).